Reading from the N-terminus, the 220-residue chain is Pyridoxine/pyridoxamine 5'-phosphate oxidase (220 aa).

Residues 49–54, 68–69, Lys75, and Gln97 each bind FMN; these read RMVLLK and YT. Lys54 lines the substrate pocket. 3 residues coordinate substrate: Tyr115, Arg119, and Ser123. FMN-binding positions include 132 to 133 and Trp176; that span reads QS. Residue 182-184 participates in substrate binding; sequence RLH. FMN is bound at residue Arg186.

Belongs to the pyridoxamine 5'-phosphate oxidase family. In terms of assembly, homodimer. Requires FMN as cofactor.

It carries out the reaction pyridoxamine 5'-phosphate + O2 + H2O = pyridoxal 5'-phosphate + H2O2 + NH4(+). It catalyses the reaction pyridoxine 5'-phosphate + O2 = pyridoxal 5'-phosphate + H2O2. The protein operates within cofactor metabolism; pyridoxal 5'-phosphate salvage; pyridoxal 5'-phosphate from pyridoxamine 5'-phosphate: step 1/1. It participates in cofactor metabolism; pyridoxal 5'-phosphate salvage; pyridoxal 5'-phosphate from pyridoxine 5'-phosphate: step 1/1. Its function is as follows. Catalyzes the oxidation of either pyridoxine 5'-phosphate (PNP) or pyridoxamine 5'-phosphate (PMP) into pyridoxal 5'-phosphate (PLP). In Paracoccus denitrificans (strain Pd 1222), this protein is Pyridoxine/pyridoxamine 5'-phosphate oxidase.